The sequence spans 564 residues: Phenylalanine--tRNA ligase beta subunit (564 aa).

Residues tyrosine 286–serine 362 form the B5 domain. Residues aspartate 340, aspartate 346, glutamate 349, and glutamate 350 each coordinate Mg(2+).

This sequence belongs to the phenylalanyl-tRNA synthetase beta subunit family. Type 2 subfamily. Tetramer of two alpha and two beta subunits. Requires Mg(2+) as cofactor.

It is found in the cytoplasm. The catalysed reaction is tRNA(Phe) + L-phenylalanine + ATP = L-phenylalanyl-tRNA(Phe) + AMP + diphosphate + H(+). This is Phenylalanine--tRNA ligase beta subunit from Borrelia recurrentis (strain A1).